A 60-amino-acid chain; its full sequence is Ribosome biogenesis protein Nop10 (60 aa).

The segment at Ala-37–Leu-60 is disordered. A compositionally biased stretch (basic residues) spans Lys-49–Leu-60.

Belongs to the NOP10 family.

Involved in ribosome biogenesis; more specifically in 18S rRNA pseudouridylation and in cleavage of pre-rRNA. This is Ribosome biogenesis protein Nop10 from Halobacterium salinarum (strain ATCC 29341 / DSM 671 / R1).